A 472-amino-acid polypeptide reads, in one-letter code: Methanethiol oxidase (472 aa).

Position 2 is an N-acetylalanine (alanine 2). 2 positions are modified to phosphoserine: serine 111 and serine 467.

It belongs to the selenium-binding protein family. Interacts with USP33. In terms of processing, the N-terminus is blocked. As to expression, present in liver and colon (at protein level).

The protein localises to the nucleus. Its subcellular location is the cytoplasm. It localises to the cytosol. The protein resides in the membrane. It carries out the reaction methanethiol + O2 + H2O = hydrogen sulfide + formaldehyde + H2O2 + H(+). It participates in organosulfur degradation. In terms of biological role, catalyzes the oxidation of methanethiol, an organosulfur compound known to be produced in substantial amounts by gut bacteria. Selenium-binding protein which may be involved in the sensing of reactive xenobiotics in the cytoplasm. May be involved in intra-Golgi protein transport. The chain is Methanethiol oxidase (Selenbp1) from Rattus norvegicus (Rat).